The primary structure comprises 270 residues: Fibroblast growth factor 5 (270 aa).

The first 20 residues, 1–20, serve as a signal peptide directing secretion; the sequence is MSLSFLLLLFLSHLILSAWA. The interval 25-86 is disordered; that stretch reads RLAPKGQPGP…EQSSFQWSPS (62 aa). The segment covering 41–69 has biased composition (low complexity); the sequence is PGGASSRRSSSSTATSSSSPASSSSAASR. A compositionally biased stretch (polar residues) spans 76–86; the sequence is LEQSSFQWSPS. The N-linked (GlcNAc...) asparagine glycan is linked to Asn112. The tract at residues 237 to 257 is disordered; sequence EKKKPPNPVKPKVPLSAPRRS.

It belongs to the heparin-binding growth factors family. As to quaternary structure, interacts with FGFR1 and FGFR2. Affinity between fibroblast growth factors (FGFs) and their receptors is increased by heparan sulfate glycosaminoglycans that function as coreceptors.

The protein resides in the secreted. Its function is as follows. Plays an important role in the regulation of cell proliferation and cell differentiation. Required for normal regulation of the hair growth cycle. Functions as an inhibitor of hair elongation by promoting progression from anagen, the growth phase of the hair follicle, into catagen the apoptosis-induced regression phase. The chain is Fibroblast growth factor 5 (FGF5) from Bos taurus (Bovine).